Reading from the N-terminus, the 597-residue chain is Chaperonin 60 subunit beta 3, chloroplastic (597 aa).

A disordered region spans residues M1 to N20. Residues M1–S29 constitute a chloroplast transit peptide. A phosphoserine mark is found at S97 and S474. Residues S387–K489 are a coiled coil.

It belongs to the chaperonin (HSP60) family. Part of the Cpn60 complex composed of 7 alpha and 7 beta subunits. Can also form a complex composed of 14 beta subunits only. Both complexes show ATPase activity. The Cpn60 complex interacts with the Cpn10 complex.

The protein resides in the plastid. It is found in the chloroplast. Involved in protein assisted folding. The chain is Chaperonin 60 subunit beta 3, chloroplastic (CPN60B3) from Arabidopsis thaliana (Mouse-ear cress).